The chain runs to 215 residues: LexA repressor (215 aa).

The segment at residues arginine 28–arginine 48 is a DNA-binding region (H-T-H motif). Active-site for autocatalytic cleavage activity residues include serine 133 and lysine 170.

The protein belongs to the peptidase S24 family. In terms of assembly, homodimer.

The catalysed reaction is Hydrolysis of Ala-|-Gly bond in repressor LexA.. Represses a number of genes involved in the response to DNA damage (SOS response), including recA and lexA. In the presence of single-stranded DNA, RecA interacts with LexA causing an autocatalytic cleavage which disrupts the DNA-binding part of LexA, leading to derepression of the SOS regulon and eventually DNA repair. This is LexA repressor from Burkholderia ambifaria (strain ATCC BAA-244 / DSM 16087 / CCUG 44356 / LMG 19182 / AMMD) (Burkholderia cepacia (strain AMMD)).